A 175-amino-acid chain; its full sequence is uncharacterized protein (175 aa).

Positions 35–56 are enriched in low complexity; sequence LIENSNYDNNNINNNNNNNNTD. The disordered stretch occupies residues 35–70; that stretch reads LIENSNYDNNNINNNNNNNNTDNDNDNNNDNEPFYN. Helical transmembrane passes span 106 to 126 and 132 to 152; these read ILSF…FFNY and YFII…KSIF.

It localises to the membrane. This is an uncharacterized protein from Dictyostelium discoideum (Social amoeba).